Consider the following 822-residue polypeptide: Protein SIEVE ELEMENT OCCLUSION A (822 aa).

A disordered region spans residues 25–62; that stretch reads PRSAEQRLADNAGERRPLAPRSHEDNPFGGHTDDHHVA. Residues 28–62 show a composition bias toward basic and acidic residues; the sequence is AEQRLADNAGERRPLAPRSHEDNPFGGHTDDHHVA.

Can form homodimer. As to expression, expressed in phloem sieve elements.

Its function is as follows. Scaffold protein required to form the phloem filament matrix in sieve elements. The sequence is that of Protein SIEVE ELEMENT OCCLUSION A from Arabidopsis thaliana (Mouse-ear cress).